The following is a 338-amino-acid chain: Heat-inducible transcription repressor HrcA (338 aa).

It belongs to the HrcA family.

Negative regulator of class I heat shock genes (grpE-dnaK-dnaJ and groELS operons). Prevents heat-shock induction of these operons. In Bacillus cereus (strain B4264), this protein is Heat-inducible transcription repressor HrcA.